The primary structure comprises 206 residues: Ribosomal RNA small subunit methyltransferase G (206 aa).

Residues Gly73, Leu78, 124–125, and Arg139 contribute to the S-adenosyl-L-methionine site; that span reads VE.

The protein belongs to the methyltransferase superfamily. RNA methyltransferase RsmG family.

It is found in the cytoplasm. The enzyme catalyses guanosine(527) in 16S rRNA + S-adenosyl-L-methionine = N(7)-methylguanosine(527) in 16S rRNA + S-adenosyl-L-homocysteine. Specifically methylates the N7 position of guanine in position 527 of 16S rRNA. This Photorhabdus laumondii subsp. laumondii (strain DSM 15139 / CIP 105565 / TT01) (Photorhabdus luminescens subsp. laumondii) protein is Ribosomal RNA small subunit methyltransferase G.